The primary structure comprises 190 residues: dCTP deaminase, dUMP-forming (190 aa).

DCTP contacts are provided by residues 101–106 (KSSLGR), Asp-119, 127–129 (TLE), Gln-148, Tyr-162, and Gln-174. The active-site Proton donor/acceptor is Glu-129. The interval 162 to 190 (YGSASAGSKYQGQRGPTPSRSYENFIKNT) is disordered. Positions 166–190 (SAGSKYQGQRGPTPSRSYENFIKNT) are enriched in polar residues.

This sequence belongs to the dCTP deaminase family. As to quaternary structure, homotrimer.

The enzyme catalyses dCTP + 2 H2O = dUMP + NH4(+) + diphosphate. The protein operates within pyrimidine metabolism; dUMP biosynthesis; dUMP from dCTP: step 1/1. Functionally, bifunctional enzyme that catalyzes both the deamination of dCTP to dUTP and the hydrolysis of dUTP to dUMP without releasing the toxic dUTP intermediate. The protein is dCTP deaminase, dUMP-forming of Mycobacterium leprae (strain Br4923).